A 505-amino-acid polypeptide reads, in one-letter code: Glutamate--cysteine ligase (505 aa).

The protein belongs to the glutamate--cysteine ligase type 1 family. Type 1 subfamily.

The enzyme catalyses L-cysteine + L-glutamate + ATP = gamma-L-glutamyl-L-cysteine + ADP + phosphate + H(+). It functions in the pathway sulfur metabolism; glutathione biosynthesis; glutathione from L-cysteine and L-glutamate: step 1/2. This Wigglesworthia glossinidia brevipalpis protein is Glutamate--cysteine ligase.